The following is a 317-amino-acid chain: Melanocyte-stimulating hormone receptor (317 aa).

At 1 to 37 the chain is on the extracellular side; it reads MPALGSPRRLLGSLNCTPPATLPLTLAPNRTGPQCLE. N-linked (GlcNAc...) asparagine glycosylation is present at Asn29. The chain crosses the membrane as a helical span at residues 38 to 63; sequence VSIPDGLFLSLGLVSLVENVLVVAAI. Residues 64–72 are Cytoplasmic-facing; sequence AKNRNLHSP. The chain crosses the membrane as a helical span at residues 73–93; sequence MYYFICCLAMSDLLVSVSNVL. Residues 94–118 are Extracellular-facing; it reads ETAVMLLLEAGVLATRAAVVQQLDN. The chain crosses the membrane as a helical span at residues 119-140; the sequence is VIDVLICSSMVSSLCFLGAIAV. Residues 141-163 are Cytoplasmic-facing; the sequence is DRYISIFYALRYHSVVTLPRAWR. Residues 164 to 183 form a helical membrane-spanning segment; sequence IIAAIWVASILTSVLSITYY. At 184 to 191 the chain is on the extracellular side; the sequence is NHTVVLLC. A helical membrane pass occupies residues 192 to 211; it reads LVGFFIAMLALMAVLYVHML. The Cytoplasmic segment spans residues 212–240; the sequence is ARACQHARGIARLQKRQRPIHQGFGLKGA. A helical transmembrane segment spans residues 241-266; that stretch reads ATLTILLGVFFLCWGPFFLHLSLIVL. Residues 267 to 279 are Extracellular-facing; sequence CPQHPTCGCIFKN. A helical membrane pass occupies residues 280-300; the sequence is FNLFLALIICNAIVDPLIYAF. Residues 301-317 are Cytoplasmic-facing; the sequence is RSQELRKTLQEVLQCSW. Cys315 carries S-palmitoyl cysteine lipidation.

Belongs to the G-protein coupled receptor 1 family. Interacts with MGRN1, but does not undergo MGRN1-mediated ubiquitination; this interaction competes with GNAS-binding and thus inhibits agonist-induced cAMP production. Interacts with OPN3; the interaction results in a decrease in MC1R-mediated cAMP signaling and ultimately a decrease in melanin production in melanocytes.

It localises to the cell membrane. Its function is as follows. Receptor for MSH (alpha, beta and gamma) and ACTH. The activity of this receptor is mediated by G proteins which activate adenylate cyclase. Mediates melanogenesis, the production of eumelanin (black/brown) and phaeomelanin (red/yellow), via regulation of cAMP signaling in melanocytes. The sequence is that of Melanocyte-stimulating hormone receptor (MC1R) from Capra hircus (Goat).